A 436-amino-acid polypeptide reads, in one-letter code: 3-ketoacyl-CoA thiolase (436 aa).

Residue cysteine 99 is the Acyl-thioester intermediate of the active site. Residues histidine 392 and cysteine 422 each act as proton acceptor in the active site.

It belongs to the thiolase-like superfamily. Thiolase family. Heterotetramer of two alpha chains (FadJ) and two beta chains (FadI).

It localises to the cytoplasm. The enzyme catalyses an acyl-CoA + acetyl-CoA = a 3-oxoacyl-CoA + CoA. It participates in lipid metabolism; fatty acid beta-oxidation. In terms of biological role, catalyzes the final step of fatty acid oxidation in which acetyl-CoA is released and the CoA ester of a fatty acid two carbons shorter is formed. The chain is 3-ketoacyl-CoA thiolase from Salmonella paratyphi A (strain ATCC 9150 / SARB42).